Reading from the N-terminus, the 176-residue chain is Sigma intracellular receptor 2 (176 aa).

Residues 1–9 lie on the Cytoplasmic side of the membrane; it reads MGTLGARRG. A helical membrane pass occupies residues 10 to 30; that stretch reads LEWFLGFYFLSHIPITLLMDL. The 149-residue stretch at 10–158 folds into the EXPERA domain; it reads LEWFLGFYFL…PYFLIPLILL (149 aa). Topologically, residues 31-68 are lumenal; the sequence is QGVLPRDLYPVELRNLQQWYIEEFKDPLLQTPPAWFKS. A helical transmembrane segment spans residues 69 to 89; the sequence is FLFCELVFQLPFFPIAAYAFF. Residues Val75 and Gln77 each contribute to the cholesterol site. The Cytoplasmic segment spans residues 90–99; that stretch reads KGGCKWIRTP. A helical transmembrane segment spans residues 100 to 120; the sequence is AIIYSVHTMTTLIPILSTLLL. At 121-141 the chain is on the lumenal side; the sequence is DDFSKASHFRGQGPKTFQERL. A helical transmembrane segment spans residues 142-162; that stretch reads FLISVYIPYFLIPLILLLFMV. The Cytoplasmic segment spans residues 163-176; sequence RNPYYKSEEKRKKK. The short motif at 172–176 is the ER retention motif element; the sequence is KRKKK.

Belongs to the TMEM97/sigma-2 receptor family. In terms of assembly, homodimer. Interacts with NPC1; the interaction impairs NPC1-mediated cholesterol transport. Interacts with PGRMC1 and LDLR; the interaction increases LDL internalization. Interacts with histatin 1/HTN1; the interaction induces HTN1-stimulating wound healing. Interacts with TSPO.

The protein localises to the rough endoplasmic reticulum membrane. Its subcellular location is the nucleus membrane. In terms of biological role, sigma-2 receptor which contributes to ameliorate dysfunctional cellular processes and slow degenerative progression by regulating cell functions including cholesterol biosynthesis/trafficking, membrane trafficking, autophagy, lipid membrane-bound protein trafficking, and receptor stabilization at the cell surface. Forms a ternary complex with PGRMC1 receptor and low density lipoprotein receptor/LDLR at the plasma membrane, which increases LDLR-mediated LDL cholesterol internalization. Decreases lysosomal sterol transporter NPC1 availability to the cell, probably through NPC1-binding, hence controlling lipid transport, including cholesterol and LBPA, outside of late endosome/lysosome. Binds regio- and stereoselective ligand 20(S)-hydroxycholesterol (20(S)-OHC) which enhances TMEM97-NPC1 interaction and decreases TMEM97-PGRMC1 and TMEM97-TSPO interactions, thereby linking OHC binding to cholesterol homeostasis. Also able to bind cholesterol. Binds histatin 1 (Hst 1)/HN1 salivary peptide at the ER membrane, which is critical for increasing mitochondria-ER contacts and stimulating Hst1 wound healing properties. May alter the activity of some cytochrome P450 proteins. Although shows homologies with sterol isomerases (EXPERA domain), not able to catalyze sterol isomerization. However, may act as sensors of these molecules. Acts as a quality control factor in the ER, promoting the proteolytic degradation of nonproductive and extramitochondrial precursor proteins in the ER membrane thus removing them from the ER surface. The chain is Sigma intracellular receptor 2 (TMEM97) from Bos taurus (Bovine).